The sequence spans 335 residues: Nonaprenyl diphosphate synthase (335 aa).

Isopentenyl diphosphate-binding residues include lysine 57, arginine 60, and histidine 90. Mg(2+)-binding residues include aspartate 97 and aspartate 101. The short motif at 97-101 (DDVMD) is the DDXXD motif element. Isopentenyl diphosphate is bound at residue arginine 107. The DDXXD motif signature appears at 223–227 (DDIID).

It belongs to the FPP/GGPP synthase family. Mg(2+) serves as cofactor.

It catalyses the reaction isopentenyl diphosphate + (2E)-geranyl diphosphate = (2E,6E)-farnesyl diphosphate + diphosphate. The enzyme catalyses isopentenyl diphosphate + (2E,6E)-farnesyl diphosphate = (2E,6E,10E)-geranylgeranyl diphosphate + diphosphate. The catalysed reaction is 5 isopentenyl diphosphate + (2E,6E,10E)-geranylgeranyl diphosphate = all-trans-nonaprenyl diphosphate + 5 diphosphate. It functions in the pathway isoprenoid biosynthesis; farnesyl diphosphate biosynthesis; farnesyl diphosphate from geranyl diphosphate and isopentenyl diphosphate. The protein operates within isoprenoid biosynthesis; geranylgeranyl diphosphate biosynthesis; geranylgeranyl diphosphate from farnesyl diphosphate and isopentenyl diphosphate: step 1/1. Its function is as follows. Catalyzes the sequential condensations of isopentenyl pyrophosphate (IPP) with geranyl diphosphate (GPP) to yield (2E,6E)-farnesyl diphosphate (E,E-FPP), with E,E-FPP to yield geranylgeranyl diphosphate (GGPP) and with GGPP to yield nonaprenyl diphosphate. May also have weak activity with dimethylallyl diphosphate (DMAPP). This chain is Nonaprenyl diphosphate synthase, found in Mycobacterium tuberculosis (strain ATCC 25618 / H37Rv).